A 301-amino-acid chain; its full sequence is UDP-N-acetylenolpyruvoylglucosamine reductase (301 aa).

The FAD-binding PCMH-type domain maps to 27–194 (RVGGPADVVF…LDAIFEGTPD (168 aa)). R172 is an active-site residue. Residue S223 is the Proton donor of the active site. E293 is an active-site residue.

Belongs to the MurB family. FAD is required as a cofactor.

Its subcellular location is the cytoplasm. The enzyme catalyses UDP-N-acetyl-alpha-D-muramate + NADP(+) = UDP-N-acetyl-3-O-(1-carboxyvinyl)-alpha-D-glucosamine + NADPH + H(+). The protein operates within cell wall biogenesis; peptidoglycan biosynthesis. In terms of biological role, cell wall formation. The chain is UDP-N-acetylenolpyruvoylglucosamine reductase from Caulobacter vibrioides (strain NA1000 / CB15N) (Caulobacter crescentus).